We begin with the raw amino-acid sequence, 505 residues long: Formate--tetrahydrofolate ligase (505 aa).

This sequence belongs to the formate--tetrahydrofolate ligase family.

The catalysed reaction is (6S)-5,6,7,8-tetrahydrofolate + formate + ATP = (6R)-10-formyltetrahydrofolate + ADP + phosphate. It participates in one-carbon metabolism; tetrahydrofolate interconversion. The protein is Formate--tetrahydrofolate ligase (fhs) of Bifidobacterium longum (strain NCC 2705).